Reading from the N-terminus, the 525-residue chain is GMP synthase [glutamine-hydrolyzing] (525 aa).

The Glutamine amidotransferase type-1 domain maps to 8-207 (KILILDFGSQ…ALDICGCAAN (200 aa)). Residue cysteine 85 is the Nucleophile of the active site. Active-site residues include histidine 181 and glutamate 183. Residues 208-400 (WKPSSIIEDA…LGLPYNMLYR (193 aa)) form the GMPS ATP-PPase domain. 235–241 (SGGVDSS) contacts ATP.

As to quaternary structure, homodimer.

It carries out the reaction XMP + L-glutamine + ATP + H2O = GMP + L-glutamate + AMP + diphosphate + 2 H(+). The protein operates within purine metabolism; GMP biosynthesis; GMP from XMP (L-Gln route): step 1/1. In terms of biological role, catalyzes the synthesis of GMP from XMP. This is GMP synthase [glutamine-hydrolyzing] from Shewanella baltica (strain OS223).